A 282-amino-acid polypeptide reads, in one-letter code: NADPH-dependent 7-cyano-7-deazaguanine reductase (282 aa).

A substrate-binding site is contributed by 88–90 (IES). Residue 90-91 (SK) participates in NADPH binding. Cysteine 189 (thioimide intermediate) is an active-site residue. Catalysis depends on aspartate 196, which acts as the Proton donor. 228 to 229 (HE) contributes to the substrate binding site. Residue 257 to 258 (RG) coordinates NADPH.

The protein belongs to the GTP cyclohydrolase I family. QueF type 2 subfamily. As to quaternary structure, homodimer.

It localises to the cytoplasm. It catalyses the reaction 7-aminomethyl-7-carbaguanine + 2 NADP(+) = 7-cyano-7-deazaguanine + 2 NADPH + 3 H(+). Its pathway is tRNA modification; tRNA-queuosine biosynthesis. Its function is as follows. Catalyzes the NADPH-dependent reduction of 7-cyano-7-deazaguanine (preQ0) to 7-aminomethyl-7-deazaguanine (preQ1). This Photorhabdus laumondii subsp. laumondii (strain DSM 15139 / CIP 105565 / TT01) (Photorhabdus luminescens subsp. laumondii) protein is NADPH-dependent 7-cyano-7-deazaguanine reductase.